Reading from the N-terminus, the 113-residue chain is Large ribosomal subunit protein uL22 (113 aa).

The protein belongs to the universal ribosomal protein uL22 family. Part of the 50S ribosomal subunit.

This protein binds specifically to 23S rRNA; its binding is stimulated by other ribosomal proteins, e.g. L4, L17, and L20. It is important during the early stages of 50S assembly. It makes multiple contacts with different domains of the 23S rRNA in the assembled 50S subunit and ribosome. In terms of biological role, the globular domain of the protein is located near the polypeptide exit tunnel on the outside of the subunit, while an extended beta-hairpin is found that lines the wall of the exit tunnel in the center of the 70S ribosome. The sequence is that of Large ribosomal subunit protein uL22 from Chloroflexus aggregans (strain MD-66 / DSM 9485).